The following is a 160-amino-acid chain: Transcriptional regulator MraZ (160 aa).

SpoVT-AbrB domains follow at residues N5 to Y50 and A93 to E136.

The protein belongs to the MraZ family. As to quaternary structure, forms oligomers.

It is found in the cytoplasm. The protein resides in the nucleoid. The protein is Transcriptional regulator MraZ of Geotalea daltonii (strain DSM 22248 / JCM 15807 / FRC-32) (Geobacter daltonii).